Consider the following 129-residue polypeptide: Sulfurtransferase TusD (129 aa).

The active-site Cysteine persulfide intermediate is Cys79.

Belongs to the DsrE/TusD family. As to quaternary structure, heterohexamer, formed by a dimer of trimers. The hexameric TusBCD complex contains 2 copies each of TusB, TusC and TusD. The TusBCD complex interacts with TusE.

The protein localises to the cytoplasm. Functionally, part of a sulfur-relay system required for 2-thiolation of 5-methylaminomethyl-2-thiouridine (mnm(5)s(2)U) at tRNA wobble positions. Accepts sulfur from TusA and transfers it in turn to TusE. The protein is Sulfurtransferase TusD of Pectobacterium carotovorum subsp. carotovorum (strain PC1).